We begin with the raw amino-acid sequence, 80 residues long: Exodeoxyribonuclease 7 small subunit (80 aa).

This sequence belongs to the XseB family. Heterooligomer composed of large and small subunits.

Its subcellular location is the cytoplasm. It catalyses the reaction Exonucleolytic cleavage in either 5'- to 3'- or 3'- to 5'-direction to yield nucleoside 5'-phosphates.. Its function is as follows. Bidirectionally degrades single-stranded DNA into large acid-insoluble oligonucleotides, which are then degraded further into small acid-soluble oligonucleotides. The chain is Exodeoxyribonuclease 7 small subunit from Pseudomonas aeruginosa (strain LESB58).